The chain runs to 146 residues: uncharacterized protein (146 aa).

The 140-residue stretch at 7–146 folds into the N-acetyltransferase domain; it reads LDINYKTDEL…DGHDVLVWTP (140 aa).

This is an uncharacterized protein from Staphylococcus saprophyticus subsp. saprophyticus (strain ATCC 15305 / DSM 20229 / NCIMB 8711 / NCTC 7292 / S-41).